Consider the following 184-residue polypeptide: uncharacterized protein (184 aa).

Positions 32-52 are disordered; the sequence is PCPRSRTQGQSRRSETHTISR.

The protein localises to the mitochondrion. This is an uncharacterized protein from Arabidopsis thaliana (Mouse-ear cress).